The following is a 692-amino-acid chain: Glycine--tRNA ligase beta subunit (692 aa).

This sequence belongs to the class-II aminoacyl-tRNA synthetase family. Tetramer of two alpha and two beta subunits.

The protein resides in the cytoplasm. The enzyme catalyses tRNA(Gly) + glycine + ATP = glycyl-tRNA(Gly) + AMP + diphosphate. The sequence is that of Glycine--tRNA ligase beta subunit from Pseudoalteromonas atlantica (strain T6c / ATCC BAA-1087).